A 229-amino-acid chain; its full sequence is Protein-lysine N-methyltransferase EFM4 (229 aa).

This sequence belongs to the class I-like SAM-binding methyltransferase superfamily. EFM4 family.

It is found in the cytoplasm. It catalyses the reaction L-lysyl-[protein] + S-adenosyl-L-methionine = N(6)-methyl-L-lysyl-[protein] + S-adenosyl-L-homocysteine + H(+). The enzyme catalyses N(6)-methyl-L-lysyl-[protein] + S-adenosyl-L-methionine = N(6),N(6)-dimethyl-L-lysyl-[protein] + S-adenosyl-L-homocysteine + H(+). In terms of biological role, S-adenosyl-L-methionine-dependent protein-lysine N-methyltransferase that mono- and dimethylates elongation factor 1-alpha (TEF1 and TEF2) at 'Lys-316'. May play a role in intracellular transport. This chain is Protein-lysine N-methyltransferase EFM4, found in Saccharomyces cerevisiae (strain ATCC 204508 / S288c) (Baker's yeast).